Here is a 762-residue protein sequence, read N- to C-terminus: Cellulose synthase-like protein H2 (762 aa).

Residues 1–15 (MAVVAAAAATGSTTR) show a composition bias toward low complexity. Residues 1-39 (MAVVAAAAATGSTTRSGGGGGEGTRSGRKKPPPPPLQER) are disordered. Helical transmembrane passes span 47-67 (AWAWRLAGLAVLLLLLALLAL) and 81-101 (GVWRVALVCEAWFAALCALNV). Active-site residues include Asp-180 and Asp-470. 6 helical membrane passes run 541 to 561 (LAYLIVLGWPLRAPFELCYGL), 582 to 602 (FSVPLALFISYNTYNFMEYMA), 619 to 639 (IISVSAWTLAFLTVLLKSLGL), 673 to 693 (LPVFIPVTALAMLNIVAVTVG), 708 to 728 (APGIGEFMCCGWLVLCFFPFV), and 739 to 759 (GIPWSVKLKASLLVAMFVTFC).

It belongs to the glycosyltransferase 2 family. Plant cellulose synthase-like H subfamily.

The protein localises to the golgi apparatus membrane. Its function is as follows. Thought to be a Golgi-localized beta-glycan synthase that polymerize the backbones of noncellulosic polysaccharides (hemicelluloses) of plant cell wall. The protein is Cellulose synthase-like protein H2 (CSLH2) of Oryza sativa subsp. indica (Rice).